Consider the following 80-residue polypeptide: Crustacean hyperglycemic hormones (80 aa).

Cystine bridges form between Cys13-Cys49, Cys29-Cys45, and Cys32-Cys58. The residue at position 78 (Val78) is a Valine amide.

It belongs to the arthropod CHH/MIH/GIH/VIH hormone family. In terms of tissue distribution, produced by the medulla terminalis X-organ in the eyestalks and transported to the sinus gland where they are stored and released.

Its subcellular location is the secreted. Functionally, hormone found in the sinus gland of isopods and decapods which controls the blood sugar level. Has a secretagogue action over the amylase released from the midgut gland. May act as a stress hormone and may be involved in the control of molting and reproduction. This is Crustacean hyperglycemic hormones from Penaeus vannamei (Whiteleg shrimp).